Here is a 376-residue protein sequence, read N- to C-terminus: Chaperone protein DnaJ (376 aa).

Residues 5 to 72 (DFYEVLGVPK…QKRAAYDQYG (68 aa)) enclose the J domain. The CR-type zinc-finger motif lies at 136–214 (GKEAQIRIPS…CHGQGRVKKQ (79 aa)). Residues Cys-149, Cys-152, Cys-166, Cys-169, Cys-188, Cys-191, Cys-202, and Cys-205 each contribute to the Zn(2+) site. 4 CXXCXGXG motif repeats span residues 149–156 (CETCHGSG), 166–173 (CGTCQGSG), 188–195 (CPHCRGTG), and 202–209 (CTACHGQG). Disordered regions lie at residues 227–246 (DGMR…GGPP) and 354–376 (KKGG…SFFS). Over residues 237 to 246 (GEPGTNGGPP) the composition is skewed to gly residues. Over residues 367-376 (WTDRLKSFFS) the composition is skewed to basic and acidic residues.

It belongs to the DnaJ family. As to quaternary structure, homodimer. Zn(2+) is required as a cofactor.

Its subcellular location is the cytoplasm. Its function is as follows. Participates actively in the response to hyperosmotic and heat shock by preventing the aggregation of stress-denatured proteins and by disaggregating proteins, also in an autonomous, DnaK-independent fashion. Unfolded proteins bind initially to DnaJ; upon interaction with the DnaJ-bound protein, DnaK hydrolyzes its bound ATP, resulting in the formation of a stable complex. GrpE releases ADP from DnaK; ATP binding to DnaK triggers the release of the substrate protein, thus completing the reaction cycle. Several rounds of ATP-dependent interactions between DnaJ, DnaK and GrpE are required for fully efficient folding. Also involved, together with DnaK and GrpE, in the DNA replication of plasmids through activation of initiation proteins. This Acidovorax ebreus (strain TPSY) (Diaphorobacter sp. (strain TPSY)) protein is Chaperone protein DnaJ.